The following is a 295-amino-acid chain: UDP-N-acetylenolpyruvoylglucosamine reductase (295 aa).

Positions 23–188 (KVGGPADFLA…ISAKFALKPG (166 aa)) constitute an FAD-binding PCMH-type domain. Residue R167 is part of the active site. The Proton donor role is filled by S217. Residue E287 is part of the active site.

Belongs to the MurB family. The cofactor is FAD.

It is found in the cytoplasm. It catalyses the reaction UDP-N-acetyl-alpha-D-muramate + NADP(+) = UDP-N-acetyl-3-O-(1-carboxyvinyl)-alpha-D-glucosamine + NADPH + H(+). Its pathway is cell wall biogenesis; peptidoglycan biosynthesis. In terms of biological role, cell wall formation. This chain is UDP-N-acetylenolpyruvoylglucosamine reductase, found in Streptococcus pyogenes serotype M6 (strain ATCC BAA-946 / MGAS10394).